The sequence spans 177 residues: uncharacterized protein (177 aa).

It localises to the plastid. The protein localises to the chloroplast. This is an uncharacterized protein from Chlorella vulgaris (Green alga).